The chain runs to 247 residues: Probable cyclic nucleotide phosphodiesterase XBJ1_0953 (247 aa).

7 residues coordinate Fe cation: Asp8, His10, Asp52, Asn82, His154, His192, and His194. AMP-binding positions include His10, Asp52, and 82–83 (NH). His194 contacts AMP.

Belongs to the cyclic nucleotide phosphodiesterase class-III family. Fe(2+) is required as a cofactor.

This Xenorhabdus bovienii (strain SS-2004) (Xenorhabdus nematophila subsp. bovienii) protein is Probable cyclic nucleotide phosphodiesterase XBJ1_0953.